Consider the following 906-residue polypeptide: Protein translocase subunit SecA (906 aa).

ATP contacts are provided by residues Gln-87, 105–109 (GEGKT), and Asp-521. The segment covering 849–865 (STATAAEPAPEASQSQS) has biased composition (low complexity). The segment at 849 to 897 (STATAAEPAPEASQSQSTNDATASQNPPITEVEASKVGRNQPCPCGSGK) is disordered. Polar residues predominate over residues 866–876 (TNDATASQNPP). Positions 891, 893, 902, and 903 each coordinate Zn(2+).

This sequence belongs to the SecA family. In terms of assembly, monomer and homodimer. Part of the essential Sec protein translocation apparatus which comprises SecA, SecYEG and auxiliary proteins SecDF-YajC and YidC. Zn(2+) serves as cofactor.

It localises to the cell inner membrane. The protein resides in the cytoplasm. It carries out the reaction ATP + H2O + cellular proteinSide 1 = ADP + phosphate + cellular proteinSide 2.. Functionally, part of the Sec protein translocase complex. Interacts with the SecYEG preprotein conducting channel. Has a central role in coupling the hydrolysis of ATP to the transfer of proteins into and across the cell membrane, serving both as a receptor for the preprotein-SecB complex and as an ATP-driven molecular motor driving the stepwise translocation of polypeptide chains across the membrane. The sequence is that of Protein translocase subunit SecA from Dichelobacter nodosus (strain VCS1703A).